Consider the following 348-residue polypeptide: D-alanine--D-alanine ligase (348 aa).

The ATP-grasp domain occupies 132 to 334 (KRVLESIGIP…YPDLIEVLVT (203 aa)). An ATP-binding site is contributed by 162-217 (LARLTFPIFVKPANMGSSVGISKAQTKVELRKAIQLALTYDSRVLIEQGVVAREIE). 3 residues coordinate Mg(2+): D288, E301, and N303.

The protein belongs to the D-alanine--D-alanine ligase family. Mg(2+) serves as cofactor. It depends on Mn(2+) as a cofactor.

It is found in the cytoplasm. It catalyses the reaction 2 D-alanine + ATP = D-alanyl-D-alanine + ADP + phosphate + H(+). The protein operates within cell wall biogenesis; peptidoglycan biosynthesis. In terms of biological role, cell wall formation. This chain is D-alanine--D-alanine ligase, found in Streptococcus pyogenes serotype M2 (strain MGAS10270).